The chain runs to 267 residues: MAASLPLSAAIVGAEESVDKEVLEMEYLFEKFLMPSDLCSNTEWLGIPEEHVRKFGMMLEDRDGYSVIFFQDGVVPGKLWCFRYWKSNGVHGLTKGWRCFVREKGLKAGDTISFFRGSACGRLFICCRLGTHATFASSSTLHHGFSMPPPPARPLVGLQSGMLARDVPSLGQARLHDGNQDGGGAPSRHVPSSGRRVEAQLSRVSSRRQRRTMKHSIPEPTIETPPILESMFLIAAPPAVKCLRLFGVNIYVLPVSSSGQPKQESSP.

Residues 30-131 (EKFLMPSDLC…RLFICCRLGT (102 aa)) constitute a DNA-binding region (TF-B3). Residues 172–221 (QARLHDGNQDGGGAPSRHVPSSGRRVEAQLSRVSSRRQRRTMKHSIPEPT) are disordered. Residues 205–214 (SSRRQRRTMK) show a composition bias toward basic residues.

It localises to the nucleus. The polypeptide is B3 domain-containing protein Os02g0455800 (Oryza sativa subsp. japonica (Rice)).